We begin with the raw amino-acid sequence, 324 residues long: HSF-like protein (324 aa).

The first 19 residues, 1–19, serve as a signal peptide directing secretion; it reads MNSLVALVLLGQIIGSTVS. Cystatin fetuin-A-type domains follow at residues 21–130 and 141–254; these read QLGP…VKCS and RDCP…SDCV. Intrachain disulfides connect Cys-28/Cys-315, Cys-85/Cys-96, Cys-110/Cys-129, Cys-143/Cys-146, Cys-205/Cys-217, and Cys-230/Cys-253. N-linked (GlcNAc...) asparagine glycosylation occurs at Asn-95. N-linked (GlcNAc...) asparagine glycosylation occurs at Asn-204. Asn-282 carries N-linked (GlcNAc...) asparagine glycosylation.

It belongs to the fetuin family. In terms of assembly, homodimer. Expressed by the liver.

Its subcellular location is the secreted. Its function is as follows. May not have antihemorrhagic activity. This Protobothrops flavoviridis (Habu) protein is HSF-like protein.